The following is a 305-amino-acid chain: NAD-dependent protein deacylase SIR4 (305 aa).

The N-terminal 10 residues, 1-10 (MSAQVMHNRV), are a transit peptide targeting the mitochondrion. One can recognise a Deacetylase sirtuin-type domain in the interval 11–305 (MGTVKDSASK…VLEELASTIR (295 aa)). NAD(+) contacts are provided by residues 37–57 (GAGV…GIYS) and 118–121 (QNVD). Residue His-139 is the Proton acceptor of the active site. Zn(2+)-binding residues include Cys-147, Cys-150, Cys-209, and Cys-212. NAD(+)-binding positions include 249-251 (GSS), 275-277 (NLG), and Ser-293.

This sequence belongs to the sirtuin family. Class II subfamily. The cofactor is Zn(2+).

Its subcellular location is the mitochondrion matrix. The catalysed reaction is N(6)-acetyl-L-lysyl-[protein] + NAD(+) + H2O = 2''-O-acetyl-ADP-D-ribose + nicotinamide + L-lysyl-[protein]. Functionally, NAD-dependent protein deacylase. Catalyzes the NAD-dependent hydrolysis of acyl groups from lysine residues. In Batrachochytrium dendrobatidis (strain JAM81 / FGSC 10211) (Frog chytrid fungus), this protein is NAD-dependent protein deacylase SIR4.